The chain runs to 676 residues: LIM domain-containing protein 1 (676 aa).

The mediates nuclear export stretch occupies residues 54 to 134; it reads KIHLQQQQQQ…PPYPPQEQRS (81 aa). Disordered regions lie at residues 104–163 and 189–389; these read KPPL…SAFH and KWGD…TSLV. Ser145 carries the phosphoserine modification. The segment at 186–260 is interaction with EGLN1/PHD2; the sequence is ASPKWGDKPG…IGGRSSEKPT (75 aa). Low complexity-rich tracts occupy residues 201–213 and 232–242; these read GLSV…SSPG and LSLSSSRSSEG. A phosphoserine mark is found at Ser233 and Ser239. Residues 243–253 are compositionally biased toward gly residues; the sequence is SLGGQNSGIGG. Residues 262 to 271 show a composition bias toward polar residues; the sequence is LWSTASSQRV. 4 positions are modified to phosphoserine: Ser272, Ser277, Ser304, and Ser316. Over residues 343 to 360 the composition is skewed to low complexity; sequence SYLSSSAPSSSPAGLDGS. The segment at 404–442 is interaction with RB1; the sequence is GPLGWSSDGSLGSVLLDSPSSPRVRLPCQPLVPGPELRP. Phosphoserine is present on residues Ser421 and Ser424. 3 LIM zinc-binding domains span residues 470–531, 535–595, and 595–664; these read GACV…SGFQ, DRCF…VLAP, and PKCA…RLEK. The segment at 472-676 is necessary for nuclear localization; that stretch reads CVKCSKGVFG…SSTALHQHHF (205 aa).

The protein belongs to the zyxin/ajuba family. In terms of assembly, interacts (via LIM domains) with TRAF6. Found in a complex with TRAF6, PRKCZ and SQSTM1. Interacts (via LIM domains) SNAI2/SLUG (via SNAG domain) and SCRT1 (via SNAG domain). Interacts with SQSTM1 and RB1. Found in a complex composed of LIMD1, VHL, EGLN1/PHD2, ELOB and CUL2. Interacts with EIF4E, AGO1, AGO2, DCP2, DDX6, LATS1, LATS2, EGLN1/PHD2, EGLN2/PHD1 and EGLN3/PHD3. Interacts (via LIM zinc-binding 2) with isoform 1 and isoform 3 of VHL. Interacts (via LIM domains) with SNAI1 (via SNAG domain). Phosphorylated during mitosis. As to expression, expressed in normal and breast cancer tissues (at protein level). Ubiquitous.

It localises to the cytoplasm. Its subcellular location is the nucleus. The protein resides in the P-body. The protein localises to the cell junction. It is found in the adherens junction. It localises to the focal adhesion. Functionally, adapter or scaffold protein which participates in the assembly of numerous protein complexes and is involved in several cellular processes such as cell fate determination, cytoskeletal organization, repression of gene transcription, cell-cell adhesion, cell differentiation, proliferation and migration. Positively regulates microRNA (miRNA)-mediated gene silencing and is essential for P-body formation and integrity. Acts as a hypoxic regulator by bridging an association between the prolyl hydroxylases and VHL enabling efficient degradation of HIF1A. Acts as a transcriptional corepressor for SNAI1- and SNAI2/SLUG-dependent repression of E-cadherin transcription. Negatively regulates the Hippo signaling pathway and antagonizes phosphorylation of YAP1. Inhibits E2F-mediated transcription, and suppresses the expression of the majority of genes with E2F1-responsive elements. Regulates osteoblast development, function, differentiation and stress osteoclastogenesis. Enhances the ability of TRAF6 to activate adapter protein complex 1 (AP-1) and negatively regulates the canonical Wnt receptor signaling pathway in osteoblasts. May act as a tumor suppressor by inhibiting cell proliferation. This chain is LIM domain-containing protein 1 (LIMD1), found in Homo sapiens (Human).